A 208-amino-acid chain; its full sequence is Large ribosomal subunit protein uL3 (208 aa).

The tract at residues 134-153 (SKFHREAGSTGQCTSPGRTF) is disordered.

Belongs to the universal ribosomal protein uL3 family. As to quaternary structure, part of the 50S ribosomal subunit. Forms a cluster with proteins L14 and L19.

Functionally, one of the primary rRNA binding proteins, it binds directly near the 3'-end of the 23S rRNA, where it nucleates assembly of the 50S subunit. The protein is Large ribosomal subunit protein uL3 of Treponema pallidum (strain Nichols).